Here is a 125-residue protein sequence, read N- to C-terminus: Small ribosomal subunit protein bS6 (125 aa).

Residues 97–125 (TEASPMKAAKEERKPLAEVENNDFEDAEE) form a disordered region. Residues 104 to 113 (AAKEERKPLA) are compositionally biased toward basic and acidic residues. The segment covering 116-125 (ENNDFEDAEE) has biased composition (acidic residues).

This sequence belongs to the bacterial ribosomal protein bS6 family.

Functionally, binds together with bS18 to 16S ribosomal RNA. The sequence is that of Small ribosomal subunit protein bS6 from Haemophilus influenzae (strain PittEE).